The primary structure comprises 540 residues: Bifunctional purine biosynthesis protein PurH (540 aa).

In terms of domain architecture, MGS-like spans Met-1–Val-144. The interval Glu-204 to Ser-224 is disordered.

Belongs to the PurH family.

The catalysed reaction is (6R)-10-formyltetrahydrofolate + 5-amino-1-(5-phospho-beta-D-ribosyl)imidazole-4-carboxamide = 5-formamido-1-(5-phospho-D-ribosyl)imidazole-4-carboxamide + (6S)-5,6,7,8-tetrahydrofolate. The enzyme catalyses IMP + H2O = 5-formamido-1-(5-phospho-D-ribosyl)imidazole-4-carboxamide. The protein operates within purine metabolism; IMP biosynthesis via de novo pathway; 5-formamido-1-(5-phospho-D-ribosyl)imidazole-4-carboxamide from 5-amino-1-(5-phospho-D-ribosyl)imidazole-4-carboxamide (10-formyl THF route): step 1/1. Its pathway is purine metabolism; IMP biosynthesis via de novo pathway; IMP from 5-formamido-1-(5-phospho-D-ribosyl)imidazole-4-carboxamide: step 1/1. This chain is Bifunctional purine biosynthesis protein PurH, found in Symbiobacterium thermophilum (strain DSM 24528 / JCM 14929 / IAM 14863 / T).